A 571-amino-acid polypeptide reads, in one-letter code: Phosphoenolpyruvate-protein phosphotransferase (571 aa).

Residue His189 is the Tele-phosphohistidine intermediate of the active site. The phosphoenolpyruvate site is built by Arg296 and Arg332. Residues Glu431 and Asp455 each coordinate Mg(2+). Residues 454 to 455 (ND) and Arg465 each bind phosphoenolpyruvate. Cys502 functions as the Proton donor in the catalytic mechanism.

This sequence belongs to the PEP-utilizing enzyme family. Homodimer. Mg(2+) is required as a cofactor.

The protein localises to the cytoplasm. It carries out the reaction L-histidyl-[protein] + phosphoenolpyruvate = N(pros)-phospho-L-histidyl-[protein] + pyruvate. Functionally, general (non sugar-specific) component of the phosphoenolpyruvate-dependent sugar phosphotransferase system (sugar PTS). This major carbohydrate active-transport system catalyzes the phosphorylation of incoming sugar substrates concomitantly with their translocation across the cell membrane. Enzyme I transfers the phosphoryl group from phosphoenolpyruvate (PEP) to the phosphoryl carrier protein (HPr). This is Phosphoenolpyruvate-protein phosphotransferase (ptsI) from Buchnera aphidicola subsp. Acyrthosiphon pisum (strain APS) (Acyrthosiphon pisum symbiotic bacterium).